Here is a 235-residue protein sequence, read N- to C-terminus: Replication protein (235 aa).

Y149 lines the DNA pocket.

The protein belongs to the Gram-positive plasmids replication protein type 1 family.

Functionally, produces a single-strand nick in a specific site of the plasmid, and this nick results in single-strand replication by rolling circle mechanism. This Bacillus sp protein is Replication protein (repB).